The primary structure comprises 243 residues: UPF0246 protein Spy49_1742 (243 aa).

The protein belongs to the UPF0246 family.

The protein is UPF0246 protein Spy49_1742 of Streptococcus pyogenes serotype M49 (strain NZ131).